The sequence spans 278 residues: Bifunctional protein FolD (278 aa).

NADP(+)-binding positions include 164 to 166 (GRS) and Thr-228.

The protein belongs to the tetrahydrofolate dehydrogenase/cyclohydrolase family. Homodimer.

It carries out the reaction (6R)-5,10-methylene-5,6,7,8-tetrahydrofolate + NADP(+) = (6R)-5,10-methenyltetrahydrofolate + NADPH. The catalysed reaction is (6R)-5,10-methenyltetrahydrofolate + H2O = (6R)-10-formyltetrahydrofolate + H(+). The protein operates within one-carbon metabolism; tetrahydrofolate interconversion. In terms of biological role, catalyzes the oxidation of 5,10-methylenetetrahydrofolate to 5,10-methenyltetrahydrofolate and then the hydrolysis of 5,10-methenyltetrahydrofolate to 10-formyltetrahydrofolate. This chain is Bifunctional protein FolD, found in Mycoplasmopsis synoviae (strain 53) (Mycoplasma synoviae).